Here is a 410-residue protein sequence, read N- to C-terminus: Phosphoglycerate kinase (410 aa).

Residues 19-21 (DLN), Arg34, 57-60 (HQGK), Arg114, and Arg154 contribute to the substrate site. ATP is bound by residues Glu332 and 358–361 (GGHS).

This sequence belongs to the phosphoglycerate kinase family. In terms of assembly, homodimer.

The protein resides in the cytoplasm. It catalyses the reaction (2R)-3-phosphoglycerate + ATP = (2R)-3-phospho-glyceroyl phosphate + ADP. The protein operates within carbohydrate degradation; glycolysis; pyruvate from D-glyceraldehyde 3-phosphate: step 2/5. The sequence is that of Phosphoglycerate kinase (pgk) from Pyrococcus horikoshii (strain ATCC 700860 / DSM 12428 / JCM 9974 / NBRC 100139 / OT-3).